Consider the following 342-residue polypeptide: Succinylglutamate desuccinylase (342 aa).

Zn(2+)-binding residues include histidine 63, glutamate 66, and histidine 155. Glutamate 219 is a catalytic residue.

The protein belongs to the AspA/AstE family. Succinylglutamate desuccinylase subfamily. Zn(2+) serves as cofactor.

The catalysed reaction is N-succinyl-L-glutamate + H2O = L-glutamate + succinate. It participates in amino-acid degradation; L-arginine degradation via AST pathway; L-glutamate and succinate from L-arginine: step 5/5. Its function is as follows. Transforms N(2)-succinylglutamate into succinate and glutamate. The polypeptide is Succinylglutamate desuccinylase (Vibrio parahaemolyticus serotype O3:K6 (strain RIMD 2210633)).